The following is a 932-amino-acid chain: MYCBP-associated protein (932 aa).

Disordered regions lie at residues 1–39 (MMKK…PVSN) and 165–187 (EEPK…PPQH). Positions 165-178 (EEPKPKPPKEEERP) are enriched in basic and acidic residues. Residue Ser-559 is modified to Phosphoserine. Thr-560 is subject to Phosphothreonine. Ser-566 is subject to Phosphoserine. Residues 789 to 886 (LPDEQGQKSP…TAPSQEPIDP (98 aa)) form a disordered region. The segment covering 795–806 (QKSPPVTESKVT) has biased composition (polar residues). Basic and acidic residues predominate over residues 810–869 (AGKEDRRGGAQEKKQLGTKDKDDKRGSKTPGKEDRPNSKKLKPKDDKKVVKSASRDRLLS).

Interacts with MYCBP.

The protein resides in the cytoplasm. It is found in the membrane. In terms of biological role, may play a role in spermatogenesis. May be involved in synaptic processes. The sequence is that of MYCBP-associated protein from Mus musculus (Mouse).